Reading from the N-terminus, the 209-residue chain is Uracil phosphoribosyltransferase (209 aa).

5-phospho-alpha-D-ribose 1-diphosphate is bound by residues Arg-79, Arg-104, and 131–139; that span reads DPMLATGGS. Uracil is bound by residues Ile-194 and 199–201; that span reads GDA. Position 200 (Asp-200) interacts with 5-phospho-alpha-D-ribose 1-diphosphate.

This sequence belongs to the UPRTase family. Mg(2+) serves as cofactor.

The catalysed reaction is UMP + diphosphate = 5-phospho-alpha-D-ribose 1-diphosphate + uracil. Its pathway is pyrimidine metabolism; UMP biosynthesis via salvage pathway; UMP from uracil: step 1/1. Its activity is regulated as follows. Allosterically activated by GTP. Functionally, catalyzes the conversion of uracil and 5-phospho-alpha-D-ribose 1-diphosphate (PRPP) to UMP and diphosphate. This chain is Uracil phosphoribosyltransferase, found in Listeria innocua serovar 6a (strain ATCC BAA-680 / CLIP 11262).